Here is a 162-residue protein sequence, read N- to C-terminus: NADH-quinone oxidoreductase subunit I (162 aa).

2 consecutive 4Fe-4S ferredoxin-type domains span residues Leu52–Gly82 and Thr93–Asn122. [4Fe-4S] cluster-binding residues include Cys62, Cys65, Cys68, Cys72, Cys102, Cys105, Cys108, and Cys112.

Belongs to the complex I 23 kDa subunit family. NDH-1 is composed of 14 different subunits. Subunits NuoA, H, J, K, L, M, N constitute the membrane sector of the complex. Requires [4Fe-4S] cluster as cofactor.

Its subcellular location is the cell inner membrane. It carries out the reaction a quinone + NADH + 5 H(+)(in) = a quinol + NAD(+) + 4 H(+)(out). Functionally, NDH-1 shuttles electrons from NADH, via FMN and iron-sulfur (Fe-S) centers, to quinones in the respiratory chain. The immediate electron acceptor for the enzyme in this species is believed to be ubiquinone. Couples the redox reaction to proton translocation (for every two electrons transferred, four hydrogen ions are translocated across the cytoplasmic membrane), and thus conserves the redox energy in a proton gradient. The polypeptide is NADH-quinone oxidoreductase subunit I (Methylobacterium sp. (strain 4-46)).